The sequence spans 64 residues: MPKMKTNKGAAKRFKKTAGGIKYKHATKRHILTKRTTKNKRQLRPNAILPRCEVAAVIRMLPYA.

This sequence belongs to the bacterial ribosomal protein bL35 family.

The polypeptide is Large ribosomal subunit protein bL35 (Vibrio parahaemolyticus serotype O3:K6 (strain RIMD 2210633)).